Here is a 569-residue protein sequence, read N- to C-terminus: Peroxisomal targeting signal receptor (569 aa).

Residue Cys5 forms a Glycyl cysteine thioester (Cys-Gly) (interchain with G-Cter in ubiquitin) linkage. Residues 6–28 are amphipathic helix 1 (AH1); sequence SVGANPLAQLNKRVQQDRTLQHG. Lys17 participates in a covalent cross-link: Glycyl lysine isopeptide (Lys-Gly) (interchain with G-Cter in ubiquitin). Residues 53 to 71 are amphipathic helix 2 (AH2); sequence KFQMEQFMAGKASSGGNMF. The WxxxF/Y motif 1 motif lies at 112 to 116; it reads WSQEF. The tract at residues 150-154 is amphipathic helix 3 (AH3); the sequence is PMNMM. The short motif at 181–185 is the WxxxF/Y motif 2 element; that stretch reads WEQQF. An amphipathic helix 4 (AH4) region spans residues 229 to 245; that stretch reads FQQIWNDIHDQTDDLDS. TPR repeat units lie at residues 281 to 315, 316 to 349, 417 to 450, 452 to 484, and 486 to 518; these read NTDA…DPGH, VDAW…DPHN, PDVQ…RPDD, CMWN…KPTF, and RARY…HEVE.

The protein belongs to the peroxisomal targeting signal receptor family. Interacts (via WxxxF/Y and LVxEF motifs) with PEX14; promoting translocation through the PEX13-PEX14 docking complex. Monoubiquitinated at Cys-5 by PEX2 during PEX5 passage through the retrotranslocation channel: monoubiquitination acts as a signal for PEX5 extraction and is required for proper export from peroxisomes and recycling. When PEX5 recycling is compromised, polyubiquitinated at Lys-17 by PEX10 during its passage through the retrotranslocation channel, leading to its degradation.

It is found in the cytoplasm. The protein resides in the cytosol. It localises to the peroxisome matrix. Receptor that mediates peroxisomal import of proteins containing a C-terminal PTS1-type tripeptide peroxisomal targeting signal (SKL-type). Binds to cargo proteins containing a PTS1 peroxisomal targeting signal in the cytosol, and translocates them into the peroxisome matrix by passing through the PEX13-PEX14 docking complex along with cargo proteins. PEX5 receptor is then retrotranslocated into the cytosol, leading to release of bound cargo in the peroxisome matrix, and reset for a subsequent peroxisome import cycle. The chain is Peroxisomal targeting signal receptor (PEX5) from Eremothecium gossypii (strain ATCC 10895 / CBS 109.51 / FGSC 9923 / NRRL Y-1056) (Yeast).